Reading from the N-terminus, the 239-residue chain is 1-(5-phosphoribosyl)-5-[(5-phosphoribosylamino)methylideneamino] imidazole-4-carboxamide isomerase (239 aa).

D12 serves as the catalytic Proton acceptor. The active-site Proton donor is D133.

Belongs to the HisA/HisF family.

It localises to the cytoplasm. The catalysed reaction is 1-(5-phospho-beta-D-ribosyl)-5-[(5-phospho-beta-D-ribosylamino)methylideneamino]imidazole-4-carboxamide = 5-[(5-phospho-1-deoxy-D-ribulos-1-ylimino)methylamino]-1-(5-phospho-beta-D-ribosyl)imidazole-4-carboxamide. It participates in amino-acid biosynthesis; L-histidine biosynthesis; L-histidine from 5-phospho-alpha-D-ribose 1-diphosphate: step 4/9. The sequence is that of 1-(5-phosphoribosyl)-5-[(5-phosphoribosylamino)methylideneamino] imidazole-4-carboxamide isomerase from Sulfurihydrogenibium sp. (strain YO3AOP1).